Reading from the N-terminus, the 366-residue chain is Palmitoyltransferase ZDHHC2 (366 aa).

Residues 1-15 lie on the Cytoplasmic side of the membrane; that stretch reads MAPSGPGGVRRRCRR. Residues 16 to 36 form a helical membrane-spanning segment; that stretch reads VLYWIPVVFISLLLGWSYYAY. At 37 to 47 the chain is on the lumenal side; sequence AIQLCIVSMEN. Residues 48-68 form a helical membrane-spanning segment; that stretch reads IGEQVVCLMAYHLLFAMFVWS. At 69-169 the chain is on the cytoplasmic side; that stretch reads YWKTIFTLPM…NNCVGFSNYK (101 aa). The region spanning 126–176 is the DHHC domain; it reads RYCDRCRLIKPDRCHHCSVCDKCILKMDHHCPWVNNCVGFSNYKFFLLFLA. Cys-156 acts as the S-palmitoyl cysteine intermediate in catalysis. Residues 170-190 form a helical membrane-spanning segment; the sequence is FFLLFLAYSLLYCLFIAATDL. Residues 191–207 lie on the Lumenal side of the membrane; that stretch reads QYFIRFWTNGLPDTQAK. Residues 208 to 228 traverse the membrane as a helical segment; that stretch reads FHIMFLFFAAAMFSVSLSSLF. Topologically, residues 229 to 366 are cytoplasmic; that stretch reads GYHCWLVSKN…NPALTMENET (138 aa). Composition is skewed to polar residues over residues 297-316 and 332-349; these read VNQDPEQPSTPAGLNSTAKN and SHLLTDSQTWTENSSNSG. The interval 297-366 is disordered; sequence VNQDPEQPST…NPALTMENET (70 aa). The mediates localization to plasma membrane and recycling endosomes stretch occupies residues 298–366; the sequence is NQDPEQPSTP…NPALTMENET (69 aa). Positions 334 to 335 match the Non-canonical dileucine endocytic signal motif; sequence LL. An NPxY-like endocytic signal motif is present at residues 357 to 360; that stretch reads NPAL.

The protein belongs to the DHHC palmitoyltransferase family. In terms of assembly, monomer. Homodimer. The monomeric form has a higher catalytic activity. Autopalmitoylated.

The protein resides in the postsynaptic density. It localises to the postsynaptic recycling endosome membrane. It is found in the cell membrane. The protein localises to the endoplasmic reticulum membrane. Its subcellular location is the golgi apparatus membrane. It catalyses the reaction L-cysteinyl-[protein] + hexadecanoyl-CoA = S-hexadecanoyl-L-cysteinyl-[protein] + CoA. It carries out the reaction L-cysteinyl-[protein] + tetradecanoyl-CoA = S-tetradecanoyl-L-cysteinyl-[protein] + CoA. The catalysed reaction is L-cysteinyl-[protein] + octadecanoyl-CoA = S-octadecanoyl-L-cysteinyl-[protein] + CoA. Functionally, palmitoyltransferase that catalyzes the addition of palmitate onto various protein substrates and is involved in a variety of cellular processes. Has no stringent fatty acid selectivity and in addition to palmitate can also transfer onto target proteins myristate from tetradecanoyl-CoA and stearate from octadecanoyl-CoA. In the nervous system, plays a role in long term synaptic potentiation by palmitoylating AKAP5 through which it regulates protein trafficking from the dendritic recycling endosomes to the plasma membrane and controls both structural and functional plasticity at excitatory synapses. In dendrites, mediates the palmitoylation of DLG4 when synaptic activity decreases and induces synaptic clustering of DLG4 and associated AMPA-type glutamate receptors. Also mediates the de novo and turnover palmitoylation of RGS7BP, a shuttle for Gi/o-specific GTPase-activating proteins/GAPs, promoting its localization to the plasma membrane in response to the activation of G protein-coupled receptors. Through the localization of these GTPase-activating proteins/GAPs, it also probably plays a role in G protein-coupled receptors signaling in neurons. Also probably plays a role in cell adhesion by palmitoylating CD9 and CD151 to regulate their expression and function. Palmitoylates the endoplasmic reticulum protein CKAP4 and regulates its localization to the plasma membrane. Could also palmitoylate LCK and regulate its localization to the plasma membrane. The chain is Palmitoyltransferase ZDHHC2 from Rattus norvegicus (Rat).